The primary structure comprises 344 residues: C-C chemokine receptor-like 2 (344 aa).

Over 1-43 the chain is Extracellular; the sequence is MANYTLAPEDEYDVLIEGELESDEAEQCDRYDTWALSAQLVPS. A glycan (N-linked (GlcNAc...) asparagine) is linked at Asn3. A helical membrane pass occupies residues 44–64; sequence LCSAVFVVGVLDNLLVVLILV. The Cytoplasmic portion of the chain corresponds to 65–74; sequence KYKGLKRVEN. Residues 75–95 traverse the membrane as a helical segment; that stretch reads IYLLNLAVSNLCFLLTLPFWA. Residues 96–104 lie on the Extracellular side of the membrane; it reads HAGGDPMCK. A disulfide bridge links Cys103 with Cys181. A helical membrane pass occupies residues 105 to 125; sequence ILIGLYFVGLYSETFFNCLLT. Residues 126-148 lie on the Cytoplasmic side of the membrane; it reads LQRYLVFLHKGNFFSVRRRVPCG. A helical membrane pass occupies residues 149 to 169; the sequence is IVTSAVAWVTAILATVPEFAV. Topologically, residues 170–198 are extracellular; it reads YKPQMEDPKYKCAFSRTPFLPADETFWKH. Residues 199 to 219 form a helical membrane-spanning segment; the sequence is FLTLKMNVSVLVFPLFIFTFL. The Cytoplasmic segment spans residues 220–238; it reads YVQMRKTLRFGEQRYSLFK. Residues 239 to 259 traverse the membrane as a helical segment; that stretch reads LVFAIMVVFLLMWAPYNIALF. Topologically, residues 260–281 are extracellular; the sequence is LSTFKEHFSLSDCKSNYNLDKS. The helical transmembrane segment at 282-302 threads the bilayer; sequence VLITKLIATTHCCVNPLLYVF. The Cytoplasmic portion of the chain corresponds to 303–344; the sequence is LDGTFRKYLCRFFHRRSNTPRQPRRRFAQGTSREEPDRSTEV. Residues 323 to 344 form a disordered region; sequence RQPRRRFAQGTSREEPDRSTEV. Positions 334–344 are enriched in basic and acidic residues; sequence SREEPDRSTEV.

Belongs to the G-protein coupled receptor 1 family.

It is found in the cell membrane. Its function is as follows. Receptor for CCL19 and chemerin/RARRES2. Does not appear to be a signaling receptor, but may have a role in modulating chemokine-triggered immune responses by capturing and internalizing CCL19 or by presenting RARRES2 ligand to CMKLR1, a functional signaling receptor. Plays a critical role for the development of Th2 responses. The sequence is that of C-C chemokine receptor-like 2 (CCRL2) from Macaca mulatta (Rhesus macaque).